Consider the following 474-residue polypeptide: Zinc finger protein 230 (474 aa).

Positions 8–76 constitute a KRAB domain; that stretch reads VTFKDVAVFF…ETATQREGNS (69 aa). The tract at residues 80 to 167 is KRNB; the sequence is TIAEAGPHED…PQQFHSGEKS (88 aa). C2H2-type zinc fingers lie at residues 168-190, 196-218, 224-246, 252-274, 280-302, 308-330, 336-358, 364-386, and 392-414; these read HTCNECGKSFCYISALRIHQRVH, SKCDMRGKEFSQSSCLQTRERVH, FKCEQCGKGFRCRAILQVHCKLH, YICEKCGRAFIHDFQLQKHQIIH, FKCEICGKSFCLRSSLNRHCMVH, YKSEECGKGFTDSLDLHKHQIIH, YNCKECGKSFRWSSYLLIHQRIH, YRCEECGKGYISKSGLNLHQRVH, and YNCKECGKSFSRASSILNHKKLH. Residues 420–442 form a C2H2-type 10; atypical zinc finger; it reads FKCEDCGKRLVHRSFCKDQQGDH.

This sequence belongs to the krueppel C2H2-type zinc-finger protein family.

The protein resides in the nucleus. Functionally, may be involved in transcriptional regulation. The polypeptide is Zinc finger protein 230 (ZNF230) (Homo sapiens (Human)).